The primary structure comprises 748 residues: Polyribonucleotide nucleotidyltransferase (748 aa).

Asp484 and Asp490 together coordinate Mg(2+). A KH domain is found at 551 to 610 (PRIETMSVPKDKIRDVIGTGGKVIREIVATTGAKVDIEDDGTVRLSSSDPANIEAAREWI). Residues 620–688 (GKIYNGKVVN…NRGKVRLSMR (69 aa)) enclose the S1 motif domain. The disordered stretch occupies residues 693 to 748 (ETGAELDDNRPPRENAERRGGERPRRDRGPRRESGDRPARRDMEPEFAPAFLRKDS). Positions 699-736 (DDNRPPRENAERRGGERPRRDRGPRRESGDRPARRDME) are enriched in basic and acidic residues.

It belongs to the polyribonucleotide nucleotidyltransferase family. It depends on Mg(2+) as a cofactor.

Its subcellular location is the cytoplasm. It carries out the reaction RNA(n+1) + phosphate = RNA(n) + a ribonucleoside 5'-diphosphate. In terms of biological role, involved in mRNA degradation. Catalyzes the phosphorolysis of single-stranded polyribonucleotides processively in the 3'- to 5'-direction. The chain is Polyribonucleotide nucleotidyltransferase from Zymomonas mobilis subsp. mobilis (strain ATCC 31821 / ZM4 / CP4).